A 174-amino-acid chain; its full sequence is MKKSIFSKKLLVSFGSLVALASIPLIAISCGQTNTDKSQQPGSGSSTSGGQSGTGLGSGTTTGGQSGTTTGGRSGSGSSSSTTGGQTGTGSDSQDSGAKGTGSDSQDSGAKGTGSDSQDSGAKGTGSDSQDSGAKGTGSDSQDSGAKGTGSDSQDSGAKGTGSDSQDSGNGSTK.

Positions methionine 1–serine 29 are cleaved as a signal peptide. Cysteine 30 carries N-palmitoyl cysteine lipidation. Cysteine 30 is lipidated: S-diacylglycerol cysteine. Positions glutamine 32–lysine 174 are disordered. Low complexity predominate over residues serine 38–glycine 49. The span at glycine 50–glycine 75 shows a compositional bias: gly residues. Positions serine 76–glycine 97 are enriched in low complexity. Tandem repeats lie at residues glycine 88–lysine 99, glycine 100–lysine 111, glycine 112–lysine 123, glycine 124–lysine 135, glycine 136–lysine 147, glycine 148–lysine 159, and glycine 160–glycine 171. The tract at residues glycine 88–glycine 171 is 7 X 12 AA tandem repeats. Polar residues predominate over residues glycine 102 to lysine 174.

The protein localises to the cell membrane. In terms of biological role, responsible for the antigenic diversity for host adaptation. In Mesomycoplasma hyorhinis (Mycoplasma hyorhinis), this protein is Variant surface antigen B (vlpB).